A 185-amino-acid chain; its full sequence is uncharacterized protein (185 aa).

The next 2 helical transmembrane spans lie at 1–19 (MLNI…TSSA) and 105–125 (AGFI…TMDV).

It localises to the membrane. This is an uncharacterized protein from Caenorhabditis elegans.